The following is a 517-amino-acid chain: Ribonuclease Y (517 aa).

The helical transmembrane segment at 1 to 21 (MIEVLIGLGAGVVGVGAGYLY) threads the bilayer. One can recognise a KH domain in the interval 207 to 273 (LINVVNIKND…TRVIELLVED (67 aa)). In terms of domain architecture, HD spans 333 to 426 (ALAHSLEVAH…VCAADALSAA (94 aa)).

Belongs to the RNase Y family.

Its subcellular location is the cell membrane. Its function is as follows. Endoribonuclease that initiates mRNA decay. In Campylobacter concisus (strain 13826), this protein is Ribonuclease Y.